Here is a 502-residue protein sequence, read N- to C-terminus: MEENIEKRICVEQLAIEDLISKLPEVLLSQILSYLPTKDIVRTSVLSKRWKSVWLLIPGLDLDSSEFPHYDTFVDFMNEFLFFSREENPCLHKLKLSIQKNENDPSCVTLWTDCVARGKLQHLDVEFGGRVMEREFWEMMPLSLYICKTLLHLRLYRVLLGNFDQSVDSLPSLKSMCLEENVYSNEASLESLISSCRVLEDLTIVKIDDNVRFLRVHSQSLTSLSVGYKSYYPGEIYYYYDRDRGNSGLVIDAPRLKYLTFNNDQSKSKTISNLGSLVKVTILGPIKISRVVGCTEQQMAHKFLTGISRVRYLIVSEDMMEVISSYLKEDSLPQFGNLSYLKASVWLSSFDFLDILPKLLESCPNLKSIVLETTCIVDRTKATVERRVSSVPECLLSSLEFVEIKNRISVDDGALEVARYFVENSVNLQKVVLRLASSFLRRGNQAVLKDILELPRRSSMCQIEVFNALNGHALCFRKNKITGRVFLDYFDVAESYYGAIVS.

Residues 17 to 63 (EDLISKLPEVLLSQILSYLPTKDIVRTSVLSKRWKSVWLLIPGLDLD) enclose the F-box domain. 7 LRR repeats span residues 70–98 (YDTFVDFMNEFLFFSREENPCLHKLKLSI), 99–127 (QKNENDPSCVTLWTDCVARGKLQHLDVEF), 147–180 (CKTLLHLRLYRVLLGNFDQSVDSLPSLKSMCLEE), 181–206 (NVYSNEASLESLISSCRVLEDLTIVK), 208–228 (DDNVRFLRVHSQSLTSLSVGY), 238–263 (YYYDRDRGNSGLVIDAPRLKYLTFNN), and 344–373 (SVWLSSFDFLDILPKLLESCPNLKSIVLET). The FBD domain occupies 384–435 (VERRVSSVPECLLSSLEFVEIKNRISVDDGALEVARYFVENSVNLQKVVLRL).

In Arabidopsis thaliana (Mouse-ear cress), this protein is Putative F-box/FBD/LRR-repeat protein At5g22610.